We begin with the raw amino-acid sequence, 719 residues long: UvrABC system protein B (719 aa).

One can recognise a Helicase ATP-binding domain in the interval 49-435 (RRINAGERDV…TGGEFVEQVI (387 aa)). ATP is bound at residue 62 to 69 (GATGTGKS). The Beta-hairpin signature appears at 115-138 (YYDYYQPEAYIAQTDTYIEKDSSI). A Helicase C-terminal domain is found at 453–606 (QIDDLIGEIR…QIAYNEANGI (154 aa)). Residues 635–654 (GGSGRNASRGRRAQGEPGRA) are disordered. Residues 674 to 709 (ADLIKDLTAQMMAAARDLQFELAARFRDEIADLKRE) form the UVR domain.

The protein belongs to the UvrB family. In terms of assembly, forms a heterotetramer with UvrA during the search for lesions. Interacts with UvrC in an incision complex.

It is found in the cytoplasm. Functionally, the UvrABC repair system catalyzes the recognition and processing of DNA lesions. A damage recognition complex composed of 2 UvrA and 2 UvrB subunits scans DNA for abnormalities. Upon binding of the UvrA(2)B(2) complex to a putative damaged site, the DNA wraps around one UvrB monomer. DNA wrap is dependent on ATP binding by UvrB and probably causes local melting of the DNA helix, facilitating insertion of UvrB beta-hairpin between the DNA strands. Then UvrB probes one DNA strand for the presence of a lesion. If a lesion is found the UvrA subunits dissociate and the UvrB-DNA preincision complex is formed. This complex is subsequently bound by UvrC and the second UvrB is released. If no lesion is found, the DNA wraps around the other UvrB subunit that will check the other stand for damage. This chain is UvrABC system protein B, found in Mycobacterium tuberculosis (strain CDC 1551 / Oshkosh).